Consider the following 241-residue polypeptide: Ribonuclease HII (241 aa).

Residues 57–241 (NFIAGVDEAG…RTYVEKILKG (185 aa)) enclose the RNase H type-2 domain. Residues Asp-63, Glu-64, and Asp-155 each coordinate a divalent metal cation.

This sequence belongs to the RNase HII family. It depends on Mn(2+) as a cofactor. Mg(2+) serves as cofactor.

The protein resides in the cytoplasm. The enzyme catalyses Endonucleolytic cleavage to 5'-phosphomonoester.. Functionally, endonuclease that specifically degrades the RNA of RNA-DNA hybrids. This Caldanaerobacter subterraneus subsp. tengcongensis (strain DSM 15242 / JCM 11007 / NBRC 100824 / MB4) (Thermoanaerobacter tengcongensis) protein is Ribonuclease HII.